Consider the following 105-residue polypeptide: Large ribosomal subunit protein uL24 (105 aa).

Belongs to the universal ribosomal protein uL24 family. In terms of assembly, part of the 50S ribosomal subunit.

One of two assembly initiator proteins, it binds directly to the 5'-end of the 23S rRNA, where it nucleates assembly of the 50S subunit. Its function is as follows. One of the proteins that surrounds the polypeptide exit tunnel on the outside of the subunit. The polypeptide is Large ribosomal subunit protein uL24 (Hahella chejuensis (strain KCTC 2396)).